Consider the following 278-residue polypeptide: MAIKVYKPTSNGRRNMTSSDFAEITKSKPEKTLLASKSKTAGRNSYGHITVRHRGGGHKQQYRIIDFKRTKDNVKAKIVAIEYDPNRSANIALLHYTDGTKAYILAPKGLTVGSWVESGVDADIKVGNALPLKNIPTGTEVHNIELKPGKGGQIARSAGTSAQVLGVDGKYTQVRLQSGEVREILSECRATIGAVGNEQHSLINIGKAGRSRWMGKRPQSRGSVMNPNDHPHGGGEGKAPVGRPQPMTPWGKKSRGIKTRDSKKASEKLIIRHRKGRK.

The tract at residues 208–278 (AGRSRWMGKR…LIIRHRKGRK (71 aa)) is disordered. The span at 209 to 219 (GRSRWMGKRPQ) shows a compositional bias: basic residues. Residues 258–270 (KTRDSKKASEKLI) are compositionally biased toward basic and acidic residues.

Belongs to the universal ribosomal protein uL2 family. As to quaternary structure, part of the 50S ribosomal subunit. Forms a bridge to the 30S subunit in the 70S ribosome.

In terms of biological role, one of the primary rRNA binding proteins. Required for association of the 30S and 50S subunits to form the 70S ribosome, for tRNA binding and peptide bond formation. It has been suggested to have peptidyltransferase activity; this is somewhat controversial. Makes several contacts with the 16S rRNA in the 70S ribosome. The protein is Large ribosomal subunit protein uL2 of Lactobacillus delbrueckii subsp. bulgaricus (strain ATCC 11842 / DSM 20081 / BCRC 10696 / JCM 1002 / NBRC 13953 / NCIMB 11778 / NCTC 12712 / WDCM 00102 / Lb 14).